We begin with the raw amino-acid sequence, 925 residues long: GPI ethanolamine phosphate transferase 1 (925 aa).

The Cytoplasmic portion of the chain corresponds to 1–6 (MWNKHR). Residues 7 to 27 (LAFILVGLLFHLFYLRSIFDI) form a helical membrane-spanning segment. The Lumenal segment spans residues 28–457 (YFVSPLVHGM…TTYNWRFIRS (430 aa)). 6 N-linked (GlcNAc...) asparagine glycosylation sites follow: N90, N138, N198, N286, N312, and N358. The chain crosses the membrane as a helical span at residues 458–478 (IVTLGFIGWITYSFTIFLRLF). Residues 479–492 (ILEKQYAMKTSPQN) are Cytoplasmic-facing. A helical membrane pass occupies residues 493–510 (LASFGALTAALNYVLYYQ). Over 511–516 (RSPFNY) the chain is Lumenal. A helical transmembrane segment spans residues 517–537 (YMYLLFPLFFWSQILTNSTIL). Residues 538 to 547 (HDGIREMFKG) lie on the Cytoplasmic side of the membrane. The chain crosses the membrane as a helical span at residues 548-568 (VSMLQRIGICALIVSIYEGIV). Over 569–574 (YGYFDR) the chain is Lumenal. A helical membrane pass occupies residues 575–595 (WIFTIIFNLLALYPFFCGIKD). The Cytoplasmic portion of the chain corresponds to 596-599 (AKTN). The chain crosses the membrane as a helical span at residues 600–620 (MFWGANSMALSIFTLFDAVKI). Position 621 (E621) is a topological domain, lumenal. A helical membrane pass occupies residues 622-642 (SLTQINVSGLLLVASGLYALW). Over 643–653 (RVSKKINSHTK) the chain is Cytoplasmic. Residues 654–674 (IVILLQILLLAMMLAVTNKSV) form a helical membrane-spanning segment. At 675–687 (TSLQQRAGLPTDA) the chain is on the lumenal side. The helical transmembrane segment at 688 to 708 (KIAGWVILTLSLSLMPLLHYL) threads the bilayer. The Cytoplasmic portion of the chain corresponds to 709–719 (KPSNDYQVRVL). A helical transmembrane segment spans residues 720–740 (VIYLTFAPTFLILTISFESFF). The Lumenal segment spans residues 741 to 775 (YLLFTNYLMLWIEIESKIKAQNIAKNSQNWLQLLR). A helical membrane pass occupies residues 776–796 (ISIIGFFLLQFAFFGTGNVAS). The Cytoplasmic segment spans residues 797 to 818 (ISSFSLDSVYRLMPVFDPFPMG). The helical transmembrane segment at 819-839 (ALLILKIMIPYILLSTALGIM) threads the bilayer. Residues 840–848 (NLKLNIKDY) are Lumenal-facing. The helical transmembrane segment at 849–869 (TVSSLILSTSDVLSLNFFYLL) threads the bilayer. Residues 870–885 (RTEGSWLDIGVTISNY) lie on the Cytoplasmic side of the membrane. The chain crosses the membrane as a helical span at residues 886–906 (CLAILSSLFMIVLELFSHFLL). Residues 907 to 925 (KNVRDNGMDIAASKQQKRH) are Lumenal-facing.

This sequence belongs to the PIGG/PIGN/PIGO family. PIGN subfamily.

Its subcellular location is the endoplasmic reticulum membrane. It functions in the pathway glycolipid biosynthesis; glycosylphosphatidylinositol-anchor biosynthesis. Functionally, ethanolamine phosphate transferase involved in glycosylphosphatidylinositol-anchor biosynthesis. Transfers ethanolamine phosphate to the first alpha-1,4-linked mannose of the glycosylphosphatidylinositol precursor of GPI-anchor. In Eremothecium gossypii (strain ATCC 10895 / CBS 109.51 / FGSC 9923 / NRRL Y-1056) (Yeast), this protein is GPI ethanolamine phosphate transferase 1 (MCD4).